A 307-amino-acid chain; its full sequence is UDP-N-acetylenolpyruvoylglucosamine reductase (307 aa).

The FAD-binding PCMH-type domain occupies 34-198 (LGGKADVYIT…LEATFALKKA (165 aa)). Residue arginine 177 is part of the active site. Residue serine 227 is the Proton donor of the active site. Residue glutamate 297 is part of the active site.

It belongs to the MurB family. It depends on FAD as a cofactor.

The protein resides in the cytoplasm. The catalysed reaction is UDP-N-acetyl-alpha-D-muramate + NADP(+) = UDP-N-acetyl-3-O-(1-carboxyvinyl)-alpha-D-glucosamine + NADPH + H(+). It functions in the pathway cell wall biogenesis; peptidoglycan biosynthesis. Functionally, cell wall formation. The polypeptide is UDP-N-acetylenolpyruvoylglucosamine reductase (Oceanobacillus iheyensis (strain DSM 14371 / CIP 107618 / JCM 11309 / KCTC 3954 / HTE831)).